Consider the following 218-residue polypeptide: Probable transaldolase (218 aa).

Catalysis depends on lysine 83, which acts as the Schiff-base intermediate with substrate.

The protein belongs to the transaldolase family. Type 3B subfamily.

It localises to the cytoplasm. The catalysed reaction is D-sedoheptulose 7-phosphate + D-glyceraldehyde 3-phosphate = D-erythrose 4-phosphate + beta-D-fructose 6-phosphate. Its pathway is carbohydrate degradation; pentose phosphate pathway; D-glyceraldehyde 3-phosphate and beta-D-fructose 6-phosphate from D-ribose 5-phosphate and D-xylulose 5-phosphate (non-oxidative stage): step 2/3. In terms of biological role, transaldolase is important for the balance of metabolites in the pentose-phosphate pathway. The chain is Probable transaldolase (tal) from Mesorhizobium japonicum (strain LMG 29417 / CECT 9101 / MAFF 303099) (Mesorhizobium loti (strain MAFF 303099)).